An 858-amino-acid chain; its full sequence is G2-specific protein kinase nim-1 (858 aa).

The region spanning 7 to 290 (YELLEKIGHG…TATLLNLPIV (284 aa)) is the Protein kinase domain. Residues 13–21 (IGHGSFGII) and lysine 36 each bind ATP. The active-site Proton acceptor is aspartate 161. Position 194 is a phosphothreonine; by autocatalysis (threonine 194). Residues 291–383 (RLMRKEKEVV…QARVEAELQR (93 aa)) are a coiled coil. 2 disordered regions span residues 495–693 (TKAP…LPQA) and 747–858 (SAVD…LSQS). Positions 516-525 (SNWEVPRETE) are enriched in basic and acidic residues. The span at 526 to 535 (MIDSGDESEA) shows a compositional bias: acidic residues. Composition is skewed to polar residues over residues 548–572 (SSKNPFSTVTTRSRPSLNSQQNSNV) and 580–598 (SKQTLATRSKTVSGVSSIG). Positions 636–648 (SANNINNSSNGGS) are enriched in low complexity. Positions 650–661 (APSSTVTSNITV) are enriched in polar residues. The segment covering 676–691 (SSFSQQQNNQPQQSLP) has biased composition (low complexity). Over residues 760 to 780 (GQSQLPTRPRSQPQPITANFE) the composition is skewed to polar residues. Low complexity predominate over residues 781 to 802 (QQQQQQQSNTNSISSSNSAGSG).

This sequence belongs to the protein kinase superfamily. CAMK Ser/Thr protein kinase family.

It localises to the nucleus. The catalysed reaction is L-seryl-[protein] + ATP = O-phospho-L-seryl-[protein] + ADP + H(+). It carries out the reaction L-threonyl-[protein] + ATP = O-phospho-L-threonyl-[protein] + ADP + H(+). Protein kinase that plays an important role in mitotic regulation. The polypeptide is G2-specific protein kinase nim-1 (nim-1) (Neurospora crassa (strain ATCC 24698 / 74-OR23-1A / CBS 708.71 / DSM 1257 / FGSC 987)).